The primary structure comprises 152 residues: Deoxyuridine 5'-triphosphate nucleotidohydrolase (152 aa).

Substrate contacts are provided by residues 72–74 (RSG), asparagine 85, and 89–91 (TID).

This sequence belongs to the dUTPase family. The cofactor is Mg(2+).

It catalyses the reaction dUTP + H2O = dUMP + diphosphate + H(+). The protein operates within pyrimidine metabolism; dUMP biosynthesis; dUMP from dCTP (dUTP route): step 2/2. Its function is as follows. This enzyme is involved in nucleotide metabolism: it produces dUMP, the immediate precursor of thymidine nucleotides and it decreases the intracellular concentration of dUTP so that uracil cannot be incorporated into DNA. The polypeptide is Deoxyuridine 5'-triphosphate nucleotidohydrolase (Rhodopseudomonas palustris (strain BisB18)).